Reading from the N-terminus, the 88-residue chain is MALLSFLFNTKPKTANAAKERLQIIIARERNGRTGPDFLPALHKELIAVISKYVKVNPDDIKISLNSQGNLEVLDVNVVLPEDELVKP.

The protein belongs to the MinE family.

Its function is as follows. Prevents the cell division inhibition by proteins MinC and MinD at internal division sites while permitting inhibition at polar sites. This ensures cell division at the proper site by restricting the formation of a division septum at the midpoint of the long axis of the cell. The chain is Cell division topological specificity factor from Herminiimonas arsenicoxydans.